Reading from the N-terminus, the 107-residue chain is ESAT-6-like protein EsxD (107 aa).

It belongs to the WXG100 family. CFP-10 subfamily.

Its subcellular location is the secreted. The sequence is that of ESAT-6-like protein EsxD from Mycobacterium tuberculosis (strain ATCC 25618 / H37Rv).